The primary structure comprises 308 residues: Ornithine carbamoyltransferase (308 aa).

Residues 56 to 59 (STRT), glutamine 83, arginine 107, and 134 to 137 (HPCQ) each bind carbamoyl phosphate. L-ornithine-binding positions include asparagine 165, aspartate 225, and 229 to 230 (SM). Residues 266–267 (CL) and arginine 294 contribute to the carbamoyl phosphate site.

This sequence belongs to the aspartate/ornithine carbamoyltransferase superfamily. OTCase family.

The protein localises to the cytoplasm. The enzyme catalyses carbamoyl phosphate + L-ornithine = L-citrulline + phosphate + H(+). It participates in amino-acid biosynthesis; L-arginine biosynthesis; L-arginine from L-ornithine and carbamoyl phosphate: step 1/3. Its function is as follows. Reversibly catalyzes the transfer of the carbamoyl group from carbamoyl phosphate (CP) to the N(epsilon) atom of ornithine (ORN) to produce L-citrulline. This chain is Ornithine carbamoyltransferase, found in Roseobacter denitrificans (strain ATCC 33942 / OCh 114) (Erythrobacter sp. (strain OCh 114)).